The chain runs to 2009 residues: Rootletin (2009 aa).

Coiled-coil stretches lie at residues 74–265 and 346–438; these read EMAS…VTSD and ASLH…LRLQ. 5 disordered regions span residues 462 to 519, 575 to 594, 636 to 665, 1180 to 1225, and 1448 to 1501; these read ALSD…CSDS, RDQT…EAQR, ELKR…LERS, EAQR…ELRS, and GRVS…EAVR. Over residues 463 to 484 the composition is skewed to polar residues; the sequence is LSDTESGVQLSSSERTADTSDG. Coiled coils occupy residues 550 to 1058 and 1091 to 1439; these read LGSV…LLAE and LEME…GLRS. The segment covering 577–586 has biased composition (low complexity); the sequence is QTAASAQAQE. Over residues 656–665 the composition is skewed to basic and acidic residues; that stretch reads ARARRELERS. Ser-1453, Ser-1463, and Ser-1469 each carry phosphoserine. Residue Tyr-1475 is modified to Phosphotyrosine. Phosphoserine occurs at positions 1476, 1479, 1483, 1489, and 1568. The span at 1479-1494 shows a compositional bias: pro residues; that stretch reads SQPPSPGLIASPAPPD. Coiled coils occupy residues 1498-1697 and 1744-1998; these read EAVR…GTLQ and HLQK…RSSA. Residues 1957–2009 form a disordered region; it reads QVQTERTLEARERAHRQRVSGLEEQVSTLKAQLHQELRRSSASVSLPPGTPEK.

The protein belongs to the rootletin family. In terms of assembly, homomer. Interacts with KLC3, NEK2 and the N-terminus of CEP250. Interacts with CEP44. Phosphorylated by NEK2 which may regulate its association with centrosomes. Highest expression detected in photoreceptor cells of retina. Expressed at lower levels in brain, trachea and kidney. Detected in all major ciliated epithelia. During embryonic development, enriched along the apical domains of neuroepithelium in brain ventricular zone, in primordia of retinal pigment epithelia and in neural retina.

The protein resides in the cytoplasm. The protein localises to the cytoskeleton. It is found in the microtubule organizing center. Its subcellular location is the centrosome. It localises to the centriole. The protein resides in the cilium basal body. Functionally, major structural component of the ciliary rootlet, a cytoskeletal-like structure in ciliated cells which originates from the basal body at the proximal end of a cilium and extends proximally toward the cell nucleus. Furthermore, is required for the correct positioning of the cilium basal body relative to the cell nucleus, to allow for ciliogenesis. Contributes to centrosome cohesion before mitosis. In Mus musculus (Mouse), this protein is Rootletin.